The sequence spans 62 residues: Antitoxin VbhA (62 aa).

The Inhibitory (S/T)XXXE(G/N) motif motif lies at 20–25 (SQRLEG). Residue glutamate 24 participates in ATP binding.

In terms of assembly, interacts with VbhT.

Functionally, antitoxin component of type II toxin-antitoxin (TA) system VbhT-VbhA. Acts by inhibiting the adenylyltransferase activity of VbhT; competes with ATP-binding and prevents productive ATP-binding to VbhT. In Bartonella schoenbuchensis (strain DSM 13525 / NCTC 13165 / R1), this protein is Antitoxin VbhA.